Reading from the N-terminus, the 456-residue chain is Exodeoxyribonuclease 7 large subunit (456 aa).

This sequence belongs to the XseA family. In terms of assembly, heterooligomer composed of large and small subunits.

The protein localises to the cytoplasm. The catalysed reaction is Exonucleolytic cleavage in either 5'- to 3'- or 3'- to 5'-direction to yield nucleoside 5'-phosphates.. Bidirectionally degrades single-stranded DNA into large acid-insoluble oligonucleotides, which are then degraded further into small acid-soluble oligonucleotides. In Shigella dysenteriae serotype 1 (strain Sd197), this protein is Exodeoxyribonuclease 7 large subunit.